Consider the following 375-residue polypeptide: 4-hydroxy-3-methylbut-2-en-1-yl diphosphate synthase (flavodoxin) (375 aa).

Residues cysteine 270, cysteine 273, cysteine 305, and glutamate 312 each coordinate [4Fe-4S] cluster.

Belongs to the IspG family. The cofactor is [4Fe-4S] cluster.

It catalyses the reaction (2E)-4-hydroxy-3-methylbut-2-enyl diphosphate + oxidized [flavodoxin] + H2O + 2 H(+) = 2-C-methyl-D-erythritol 2,4-cyclic diphosphate + reduced [flavodoxin]. It functions in the pathway isoprenoid biosynthesis; isopentenyl diphosphate biosynthesis via DXP pathway; isopentenyl diphosphate from 1-deoxy-D-xylulose 5-phosphate: step 5/6. Converts 2C-methyl-D-erythritol 2,4-cyclodiphosphate (ME-2,4cPP) into 1-hydroxy-2-methyl-2-(E)-butenyl 4-diphosphate. This is 4-hydroxy-3-methylbut-2-en-1-yl diphosphate synthase (flavodoxin) from Yersinia pseudotuberculosis serotype IB (strain PB1/+).